The sequence spans 451 residues: Tubulin alpha chain (451 aa).

Glutamine 11 contacts GTP. Lysine 40 bears the N6-acetyllysine mark. Positions 71, 140, 144, 145, 179, 206, and 228 each coordinate GTP. Glutamate 71 contributes to the Mg(2+) binding site. Glutamate 254 is a catalytic residue.

The protein belongs to the tubulin family. Dimer of alpha and beta chains. A typical microtubule is a hollow water-filled tube with an outer diameter of 25 nm and an inner diameter of 15 nM. Alpha-beta heterodimers associate head-to-tail to form protofilaments running lengthwise along the microtubule wall with the beta-tubulin subunit facing the microtubule plus end conferring a structural polarity. Microtubules usually have 13 protofilaments but different protofilament numbers can be found in some organisms and specialized cells. Mg(2+) serves as cofactor. Post-translationally, undergoes a tyrosination/detyrosination cycle, the cyclic removal and re-addition of a C-terminal tyrosine residue by the enzymes tubulin tyrosine carboxypeptidase (TTCP) and tubulin tyrosine ligase (TTL), respectively. Acetylation of alpha chains at Lys-40 stabilizes microtubules and affects affinity and processivity of microtubule motors. This modification has a role in multiple cellular functions, ranging from cell motility, cell cycle progression or cell differentiation to intracellular trafficking and signaling. In terms of tissue distribution, actively expressed in the lens but does not seem to be lens-specific.

The protein localises to the cytoplasm. It localises to the cytoskeleton. It catalyses the reaction GTP + H2O = GDP + phosphate + H(+). Tubulin is the major constituent of microtubules, a cylinder consisting of laterally associated linear protofilaments composed of alpha- and beta-tubulin heterodimers. Microtubules grow by the addition of GTP-tubulin dimers to the microtubule end, where a stabilizing cap forms. Below the cap, tubulin dimers are in GDP-bound state, owing to GTPase activity of alpha-tubulin. The chain is Tubulin alpha chain from Enteroctopus dofleini (North Pacific giant octopus).